Reading from the N-terminus, the 243-residue chain is Max-interacting protein 1 (243 aa).

The bHLH domain occupies 76-128; that stretch reads HYRSTHNELEKNRRAHLRLCLERLKTLIPLGPECSRHTTLGLLNKAKAHIKKL. Positions 164–235 are disordered; that stretch reads EAERIRTDSM…TASDEGYSSC (72 aa). Over residues 188 to 198 the composition is skewed to acidic residues; sequence DQEEMEVDVES. The segment covering 222–235 has biased composition (polar residues); that stretch reads SLQSTASDEGYSSC.

As to quaternary structure, efficient DNA binding requires dimerization with another bHLH protein. Binds DNA as a heterodimer with MAX.

It is found in the nucleus. Transcriptional repressor. MXI1 binds with MAX to form a sequence-specific DNA-binding protein complex which recognizes the core sequence 5'-CAC[GA]TG-3'. MXI1 thus antagonizes MYC transcriptional activity by competing for MAX. The chain is Max-interacting protein 1 (mxi1) from Danio rerio (Zebrafish).